The following is a 360-amino-acid chain: Glutamate 5-kinase (360 aa).

Residue Lys-7 coordinates ATP. Residues Ser-47, Asp-134, and Asn-146 each coordinate substrate. Residues 166-167 and 208-214 contribute to the ATP site; these read TD and TGGIKTK. Positions 273–344 constitute a PUA domain; the sequence is VGEIHLDDGA…IGINSRSETT (72 aa).

The protein belongs to the glutamate 5-kinase family.

Its subcellular location is the cytoplasm. It carries out the reaction L-glutamate + ATP = L-glutamyl 5-phosphate + ADP. Its pathway is amino-acid biosynthesis; L-proline biosynthesis; L-glutamate 5-semialdehyde from L-glutamate: step 1/2. Catalyzes the transfer of a phosphate group to glutamate to form L-glutamate 5-phosphate. This Prochlorococcus marinus (strain NATL2A) protein is Glutamate 5-kinase.